The primary structure comprises 848 residues: Neuroligin-3 (848 aa).

The first 37 residues, 1-37 (MWLRLGPPSLSLSPKPTVGRSLCLTLWFLSLALRAST), serve as a signal peptide directing secretion. Residues 38-709 (QAPAPTVNTH…NPRDYSTELS (672 aa)) are Extracellular-facing. The N-linked (GlcNAc...) asparagine glycan is linked to N98. A disulfide bond links C106 and C141. Residues 170–195 (RKGGSGAKKQGEDLADNDGDEDEDIR) form a disordered region. A compositionally biased stretch (acidic residues) spans 182-194 (DLADNDGDEDEDI). 2 disulfides stabilise this stretch: C340-C351 and C510-C544. N-linked (GlcNAc...) asparagine glycosylation is present at N545. Composition is skewed to polar residues over residues 645–656 (TKVPPPDTTHSS) and 677–689 (AYSNENAQGSWNG). The tract at residues 645–694 (TKVPPPDTTHSSHITRRPNGKTWSTKRPAISPAYSNENAQGSWNGDQDAG) is disordered. The chain crosses the membrane as a helical span at residues 710–730 (VTIAVGASLLFLNVLAFAALY). The Cytoplasmic portion of the chain corresponds to 731 to 848 (YRKDKRRQEP…LPHSHSTTRV (118 aa)). S745 carries the phosphoserine modification. Y792 carries the phosphotyrosine modification.

It belongs to the type-B carboxylesterase/lipase family. Homodimer, and heterodimer with NLGN1 and NLGN2. Interacts with neurexins NRXN1, NRXN2 and NRXN3. Interaction with neurexins is mediated by heparan sulfate glycan modification on neurexin. Interacts (via its C-terminus) with DLG4/PSD-95 (via PDZ domain 3). As to expression, expressed in the blood vessel walls (at protein level). Detected in throughout the brain and in spinal cord. Detected in brain, and at lower levels in pancreas islet beta cells.

It is found in the cell membrane. Its subcellular location is the synapse. In terms of biological role, cell surface protein involved in cell-cell-interactions via its interactions with neurexin family members. Plays a role in synapse function and synaptic signal transmission, and may mediate its effects by clustering other synaptic proteins. May promote the initial formation of synapses, but is not essential for this. May also play a role in glia-glia or glia-neuron interactions in the developing peripheral nervous system. This is Neuroligin-3 (NLGN3) from Homo sapiens (Human).